The sequence spans 558 residues: Tyrosine N-monooxygenase (558 aa).

Residues 13–33 form a helical membrane-spanning segment; that stretch reads VLAAPLLSSSAILKLLLFVVT. The segment at 48-67 is disordered; that stretch reads TTKCSSTTCASPPAGVGNPP. Positions 49 to 65 are enriched in low complexity; the sequence is TKCSSTTCASPPAGVGN. Heme b contacts are provided by R138, R167, H422, R491, and C493.

The protein belongs to the cytochrome P450 family. The cofactor is heme b.

It localises to the endoplasmic reticulum membrane. The enzyme catalyses L-tyrosine + 2 reduced [NADPH--hemoprotein reductase] + 2 O2 = (E)-4-hydroxyphenylacetaldehyde oxime + 2 oxidized [NADPH--hemoprotein reductase] + CO2 + 3 H2O + 2 H(+). It catalyses the reaction L-tyrosine + reduced [NADPH--hemoprotein reductase] + O2 = N-hydroxy-L-tyrosine + oxidized [NADPH--hemoprotein reductase] + H2O + 2 H(+). The catalysed reaction is N-hydroxy-L-tyrosine + reduced [NADPH--hemoprotein reductase] + O2 = N,N-dihydroxy-L-tyrosine + oxidized [NADPH--hemoprotein reductase] + H2O + H(+). It carries out the reaction N,N-dihydroxy-L-tyrosine + H(+) = (E)-4-hydroxyphenylacetaldehyde oxime + CO2 + H2O. It participates in secondary metabolite biosynthesis; dhurrin biosynthesis; dhurrin from L-tyrosine: step 1/3. In terms of biological role, cytochrome P450 involved in the biosynthesis of the cyanogenic glucoside dhurrin. Catalyzes the conversion of L-tyrosine to p-hydroxyphenylacetaldehyde oxime, via the N-hydroxy-L-tyrosine and N,N-dihydroxy-L-tyrosine intermediates. Produces the (E) isomer of the final oxime product. This Sorghum bicolor (Sorghum) protein is Tyrosine N-monooxygenase (CYP79A1).